Reading from the N-terminus, the 245-residue chain is Probable phosphatase YcdX (245 aa).

The Zn(2+) site is built by H7, H9, H15, H40, E73, H101, H131, D192, and H194.

The protein belongs to the PHP family. As to quaternary structure, homotrimer. The cofactor is Zn(2+).

This Escherichia fergusonii (strain ATCC 35469 / DSM 13698 / CCUG 18766 / IAM 14443 / JCM 21226 / LMG 7866 / NBRC 102419 / NCTC 12128 / CDC 0568-73) protein is Probable phosphatase YcdX.